The following is a 162-amino-acid chain: MAQDAITSVINSADVQGKYLDSAALDKLKGYFGTGELRVRAASTISANAAAIVKEAVAKSLLYSDVTRPGGNMYTTRRYAACIRDLDYYLRYATYAMLAGDPSILDERVLNGLKETYNSLGVPVSSTVQAIQAIKEVTASLVGSDAGKEMGVYLDYISSGLS.

The residue at position 72 (asparagine 72) is an N4-methylasparagine. Residue cysteine 82 coordinates (2R,3E)-phycocyanobilin.

Belongs to the phycobiliprotein family. Heterodimer of an alpha and a beta chain. Contains one covalently linked phycocyanobilin chromophore.

The protein resides in the cellular thylakoid membrane. In terms of biological role, light-harvesting photosynthetic bile pigment-protein from the phycobiliprotein complex. Allophycocyanin has a maximum absorption at approximately 650 nanometers. This chain is Allophycocyanin beta chain, found in Microchaete diplosiphon (Fremyella diplosiphon).